Reading from the N-terminus, the 103-residue chain is Protein E7 (103 aa).

The segment at 1 to 47 (MIGKEVTIPDIILQEEFGQPIDLQCYENLTAEAPAEQELEAEEELIQ) is E7 terminal domain. The LXCXE motif; interaction with host RB1 and TMEM173/STING signature appears at 23–27 (LQCYE). A zinc finger lies at 57-94 (CGGGCGARLRVFVLATDAAIRSFQELLLEELQFLCPQC). The Nuclear export signal signature appears at 76–84 (IRSFQELLL).

Belongs to the papillomaviridae E7 protein family. In terms of assembly, homodimer. Homooligomer. Interacts with host RB1; this interaction induces dissociation of RB1-E2F1 complex thereby disrupting RB1 activity. Interacts with host EP300; this interaction represses EP300 transcriptional activity. Interacts with protein E2; this interaction inhibits E7 oncogenic activity. Interacts with host TMEM173/STING; this interaction impairs the ability of TMEM173/STING to sense cytosolic DNA and promote the production of type I interferon (IFN-alpha and IFN-beta). Post-translationally, highly phosphorylated.

The protein localises to the host cytoplasm. It localises to the host nucleus. Functionally, plays a role in viral genome replication by driving entry of quiescent cells into the cell cycle. Stimulation of progression from G1 to S phase allows the virus to efficiently use the cellular DNA replicating machinery to achieve viral genome replication. E7 protein has both transforming and trans-activating activities. Induces the disassembly of the E2F1 transcription factor from RB1, with subsequent transcriptional activation of E2F1-regulated S-phase genes. Interferes with host histone deacetylation mediated by HDAC1 and HDAC2, leading to transcription activation. Also plays a role in the inhibition of both antiviral and antiproliferative functions of host interferon alpha. Interaction with host TMEM173/STING impairs the ability of TMEM173/STING to sense cytosolic DNA and promote the production of type I interferon (IFN-alpha and IFN-beta). In Homo sapiens (Human), this protein is Protein E7.